A 258-amino-acid polypeptide reads, in one-letter code: MVSQEAVVFLALSGAIAFLLPIGLIVWFKRKYGASLKVFFIGALTFFVFAQLLEGGVHVYVLQVNEMTKEAMQHPLWYGIYGCLMAGIFEECGRYLMMRFFMKRHHTWADGLAFGAGHGGLEAILITGLSSISLIVYAFAINSGTFEQLLVNGDVKQALLPIQEQLLHTPSYEWMLGGIERISAIAVQIGLSLLVLYAVKNRRPLFLLYSILLHALFNVPAVLYQRGIIEHAAAVEIIVALIAALSVYWIVKAKRVFQ.

Transmembrane regions (helical) follow at residues 8–28 (VFLA…IVWF), 38–58 (VFFI…GGVH), 70–90 (EAMQ…GIFE), 121–141 (LEAI…AFAI), 176–196 (LGGI…LLVL), 204–224 (PLFL…AVLY), and 231–251 (HAAA…YWIV).

The protein localises to the cell membrane. This is an uncharacterized protein from Bacillus subtilis (strain 168).